The primary structure comprises 454 residues: Type II methyltransferase M.MvaI (454 aa).

This sequence belongs to the N(4)/N(6)-methyltransferase family. N(4) subfamily.

The enzyme catalyses a 2'-deoxycytidine in DNA + S-adenosyl-L-methionine = an N(4)-methyl-2'-deoxycytidine in DNA + S-adenosyl-L-homocysteine + H(+). An alpha subtype methylase, recognizes the double-stranded sequence 5'-CCWGG-3', methylatES C-2 on both strands, and protects the DNA from cleavage by the MvaI endonuclease. This chain is Type II methyltransferase M.MvaI, found in Kocuria varians (Micrococcus varians).